A 309-amino-acid chain; its full sequence is Gamma-hemolysin component A (309 aa).

The first 29 residues, 1–29, serve as a signal peptide directing secretion; it reads MIKNKILTATLAVGLIAPLANPFIEISKA.

The protein belongs to the aerolysin family. In terms of assembly, toxicity requires sequential binding and synergistic association of a class S and a class F component which form heterooligomeric complexes. HlgA (class S) associates with HlgB (class F) thus forming an AB toxin in strains producing both gamma-hemolysins and leukocidins. HlgA and LukF-PV can also form a complex.

The protein resides in the secreted. Toxin that seems to act by forming pores in the membrane of the cell. Has a hemolytic and a leucotoxic activity. The chain is Gamma-hemolysin component A (hlgA) from Staphylococcus aureus (strain MRSA252).